A 545-amino-acid chain; its full sequence is Tripartite motif-containing 55 (545 aa).

The RING-type zinc finger occupies 26–82; the sequence is CPICLEMFTKPVVILPCQHNLCRKCASDIFQASNPYLPTRGGTTVASGGRFRCPSCR. A B box-type zinc finger spans residues 119–161; that stretch reads LDQPMCEEHEEERINIYCLNCEVPTCSLCKVFGAHKDCQVAPL. 4 residues coordinate Zn(2+): cysteine 124, histidine 127, cysteine 147, and histidine 153. Residues 269–327 form the COS domain; sequence MDEPEMAVFLQNAKTLLQKIVEASKAFQMEKLEQGYEIMSNFTVNLNREEKIIREIDFS. Disordered regions lie at residues 324–352, 359–378, and 417–532; these read IDFSREEEEEEDAGEIDEEGEGEDAVEVE, IASSGEEESLEKAAEPSQLP, and SQQT…EPAR. The segment covering 328-352 has biased composition (acidic residues); sequence REEEEEEDAGEIDEEGEGEDAVEVE. Residues 417 to 428 show a composition bias toward polar residues; that stretch reads SQQTTQSETSGP. A compositionally biased stretch (low complexity) spans 474–485; the sequence is SSVQSAEVAEAA. Residues 486 to 506 show a composition bias toward polar residues; sequence TNEQAAVSGKESSSTAATSQI.

In terms of processing, targeted for degradation through the proteasomal and lysosomal pathways in the presence of SUMO3. As to expression, widely expressed in various tissues, besides skeletal muscle and heart, such as brain, lung, liver, spleen and kidney.

It localises to the nucleus. The protein resides in the cytoplasm. It carries out the reaction S-ubiquitinyl-[E2 ubiquitin-conjugating enzyme]-L-cysteine + [acceptor protein]-L-lysine = [E2 ubiquitin-conjugating enzyme]-L-cysteine + N(6)-ubiquitinyl-[acceptor protein]-L-lysine.. Its function is as follows. E3 ubiquitin ligase that plays an important role in regulating cardiac development and contractility, muscle growth, metabolism, and fiber-type differentiation. Acts as a critical factor that regulates cardiomyocyte size during development in concert with TRIM63 by regulating E2F1-mediated gene expression. Plays a role in apoptosis induction in cardiomyocytes by promoting ubiquitination of the DUSP1 phosphatase. Promotes non-canonical NF-kappa-B signaling and B-cell-mediated immune responses by mediating NFKB2 'Lys-48'-linked ubiquitination and processing. In turn, NFKB2 is further processed by valosin-containing protein/VCP, an ATPase that mediates ubiquitin-dependent protein degradation by the proteasome. May play a role in preventing macrophages from producing inflammatory factors and migrating by downregulating the level of nuclear NF-kappa-B subunit RELA. Modifies also PPARG via polyubiquitination and accelerates PPARG proteasomal degradation to inhibit its activity. In Mus musculus (Mouse), this protein is Tripartite motif-containing 55 (Trim55).